A 275-amino-acid chain; its full sequence is uncharacterized protein (275 aa).

Asp45 lines the NADPH pocket. Catalysis depends on proton donor residues Tyr50 and His111. NADPH-binding residues include Ser139, Gln162, Leu191, Lys196, Ser232, Ser233, and Arg237.

The protein belongs to the aldo/keto reductase family.

The protein resides in the cytoplasm. Its subcellular location is the nucleus. This is an uncharacterized protein from Schizosaccharomyces pombe (strain 972 / ATCC 24843) (Fission yeast).